The primary structure comprises 357 residues: Geranylgeranyl pyrophosphate synthase, chloroplastic (357 aa).

Residues 1 to 40 (MRSNLCHPLKNQLPISFFLSGTIRKPIFSCSRLSISAIIT) constitute a chloroplast transit peptide. The isopentenyl diphosphate site is built by Lys106, Arg109, and His138. Mg(2+)-binding residues include Asp145 and Asp151. Arg156 is a binding site for dimethylallyl diphosphate. Residue Arg157 coordinates isopentenyl diphosphate. The dimethylallyl diphosphate site is built by Lys242, Thr243, Gln280, Lys297, and Lys307.

It belongs to the FPP/GGPP synthase family. It depends on Mg(2+) as a cofactor.

Its subcellular location is the plastid. The protein resides in the chloroplast. The catalysed reaction is isopentenyl diphosphate + dimethylallyl diphosphate = (2E)-geranyl diphosphate + diphosphate. It catalyses the reaction isopentenyl diphosphate + (2E)-geranyl diphosphate = (2E,6E)-farnesyl diphosphate + diphosphate. The enzyme catalyses isopentenyl diphosphate + (2E,6E)-farnesyl diphosphate = (2E,6E,10E)-geranylgeranyl diphosphate + diphosphate. The protein operates within isoprenoid biosynthesis; farnesyl diphosphate biosynthesis; farnesyl diphosphate from geranyl diphosphate and isopentenyl diphosphate: step 1/1. It participates in isoprenoid biosynthesis; geranyl diphosphate biosynthesis; geranyl diphosphate from dimethylallyl diphosphate and isopentenyl diphosphate: step 1/1. Its pathway is isoprenoid biosynthesis; geranylgeranyl diphosphate biosynthesis; geranylgeranyl diphosphate from farnesyl diphosphate and isopentenyl diphosphate: step 1/1. Its function is as follows. Catalyzes the trans-addition of the three molecules of IPP onto DMAPP to form geranylgeranyl pyrophosphate. In Catharanthus roseus (Madagascar periwinkle), this protein is Geranylgeranyl pyrophosphate synthase, chloroplastic (GGPS1).